The sequence spans 377 residues: Actin-related protein T2 (377 aa).

This sequence belongs to the actin family.

It localises to the cytoplasm. The protein localises to the cytoskeleton. This chain is Actin-related protein T2 (ACTRT2), found in Homo sapiens (Human).